The sequence spans 47 residues: Ribosome-inactivating protein luffin P1 (47 aa).

Disulfide bonds link Cys12–Cys33 and Cys16–Cys29.

In terms of assembly, homotetramer.

The catalysed reaction is Endohydrolysis of the N-glycosidic bond at one specific adenosine on the 28S rRNA.. Functionally, inhibits protein synthesis in animal cells. In Luffa aegyptiaca (Sponge gourd), this protein is Ribosome-inactivating protein luffin P1.